Reading from the N-terminus, the 628-residue chain is Nuclear RNA export factor 1 (628 aa).

Residues 47–83 (DTQSRYEDDDEPAVPVRASLTSASSRGRGGSSRGFGQ) are disordered. Residues 63 to 72 (RASLTSASSR) are compositionally biased toward low complexity. The region spanning 100-179 (YKCRATGAAK…EFYTSKVPAP (80 aa)) is the RRM domain. LRR repeat units follow at residues 245-270 (NIVALSLSNNRIRHLDYASALVSIAK) and 271-294 (FVMELDLSHNHISTEKELEKFAGL). Residues 365 to 526 (LVEQFVTSYF…VAVISDQLFI (162 aa)) form the NTF2 domain. Residues 576–628 (PIREEMIKAMCQFSGMIPPFSEKCLADCAWNFDFACQKFNEIKSSVPAEAFAH) enclose the TAP-C domain.

It belongs to the NXF family. Interacts with nucleoporins, Nup98, Nup153 and Nup214.

Its subcellular location is the nucleus. Its function is as follows. Involved in RNA export from the nucleus to the cytoplasm. In Caenorhabditis elegans, this protein is Nuclear RNA export factor 1 (nxf-1).